The chain runs to 433 residues: Trigger factor (433 aa).

Positions N161 to P246 constitute a PPIase FKBP-type domain.

This sequence belongs to the FKBP-type PPIase family. Tig subfamily.

It localises to the cytoplasm. The catalysed reaction is [protein]-peptidylproline (omega=180) = [protein]-peptidylproline (omega=0). In terms of biological role, involved in protein export. Acts as a chaperone by maintaining the newly synthesized protein in an open conformation. Functions as a peptidyl-prolyl cis-trans isomerase. The polypeptide is Trigger factor (Haemophilus ducreyi (strain 35000HP / ATCC 700724)).